A 105-amino-acid chain; its full sequence is Synaptic plasticity regulator PANTS (105 aa).

It belongs to the UPF0545 family. In terms of assembly, interacts with RTN4 isoform A/Nogo-A; the interaction results in enhanced RTN4-mediated inhibition of AMPA receptor clustering. Also interacts with NCAM1, RANBP2 and CCT8. Post-translationally, rapidly degraded by proteolysis following neuronal stimulation, resulting in increased AMPA receptor clustering.

It is found in the synapse. It localises to the synaptic cleft. Its function is as follows. Negatively regulates long-term potentiation and modulates adult synaptic plasticity. Stabilizes the interaction of RTN4 isoform A/Nogo-A with its receptors, inhibiting clustering of postsynaptic AMPA receptors at synaptic sites. Upon neuronal stimulation, degraded at synapses, reducing RTN4 signaling and allowing AMPA receptor clustering at individual synapses. The polypeptide is Synaptic plasticity regulator PANTS (C22orf39) (Homo sapiens (Human)).